Consider the following 298-residue polypeptide: Myoblast determination protein 1 homolog (298 aa).

Over residues 53-73 (PEEHPHTRAPPREPTEEEHVR) the composition is skewed to basic and acidic residues. The disordered stretch occupies residues 53-77 (PEEHPHTRAPPREPTEEEHVRAPSG). The region spanning 100–151 (DRRKAATMRERRRLSKVNEAFETLKRCTSTNPNQRLPKVEILRNAIRYIESL) is the bHLH domain. Disordered stretches follow at residues 170-220 (SGES…GKSS) and 242-298 (CPIL…YQVL). Polar residues-rich tracts occupy residues 173-183 (SDASSPRSNCS) and 257-284 (CSPQ…LPQE).

Efficient DNA binding requires dimerization with another bHLH protein. Seems to form active heterodimers with ITF-2.

It is found in the nucleus. Its function is as follows. Acts as a transcriptional activator that promotes transcription of muscle-specific target genes and plays a role in muscle differentiation. Induces fibroblasts to differentiate into myoblasts. Interacts with and is inhibited by the twist protein. This interaction probably involves the basic domains of both proteins. In Gallus gallus (Chicken), this protein is Myoblast determination protein 1 homolog (MYOD1).